A 300-amino-acid polypeptide reads, in one-letter code: uncharacterized protein (300 aa).

Ser49 serves as the catalytic Charge relay system. Tyr137 (proton donor) is an active-site residue. Lys165 functions as the Schiff-base intermediate with substrate in the catalytic mechanism.

It belongs to the DapA family. As to quaternary structure, homotetramer.

It localises to the cytoplasm. Functionally, upon expression in E.coli complements a dapA deletion mutation, but this may not be its physiological function. This is an uncharacterized protein from Rhizobium meliloti (Ensifer meliloti).